The sequence spans 83 residues: Probable insulin-like peptide alpha-type 2 (83 aa).

Positions 1–21 (MHTTTILICFFIFLVQVSTMD) are cleaved as a signal peptide. 3 cysteine pairs are disulfide-bonded: Cys-32–Cys-66, Cys-44–Cys-79, and Cys-54–Cys-80.

This sequence belongs to the insulin family.

The protein localises to the secreted. This Caenorhabditis elegans protein is Probable insulin-like peptide alpha-type 2 (ins-22).